The chain runs to 85 residues: Mitochondrial protein pet191 homolog (85 aa).

Residues 18–61 (HSDCMFVKKKSARECLKNKDELPEECKNLIEAYGECKRQMLDMT) form the CHCH domain. A Cx10C motif motif is present at residues 21 to 32 (CMFVKKKSAREC). 2 disulfides stabilise this stretch: Cys21-Cys53 and Cys32-Cys43. A Cx9C motif motif is present at residues 43–53 (CKNLIEAYGEC). Positions 65-85 (RIAPEKNTDQDTEKPSNVDEQ) are disordered.

It belongs to the PET191 family.

The protein localises to the mitochondrion. Involved in the assembly of cytochrome c oxidase. This is Mitochondrial protein pet191 homolog from Schizosaccharomyces pombe (strain 972 / ATCC 24843) (Fission yeast).